Here is a 491-residue protein sequence, read N- to C-terminus: MDRKMVESLFQRASTLKCLVVGDLMLDEYLWGRTDRISPEAPVQVVDVLREDLRLGGAGNVANNLLALGCQVTVASVIGEDENGWALLKAFSRQGVDTAPIYQEPGRRTGRKTRVIAANQQIVRIDRESREPLSGQIEQQLINWLQQHITGFDVVLVSDYLKGVLTPSVLASVTSTASRRNIPVLVDPKGSDYSKYRGATCLTPNRKEAEAASGVPIQDGASLQQAADTIMSTVGLDNLLITRSEEGMSLFCGNGETVHIPTVAREVFDVTGAGDTVLALLACGLAGGLPLAESARLANVAAGIAVAKLGTSTVTPAEIIAAVSLEHRDSDSKIKNREVLSEIIAAERAKGRQVVFTNGCFDLLHAGHVKYLQAARRLGDLLILGLNSDASVRRLKGPKRPLIDEDERGHLMAALDCIDYVCLFEEDTPLELITALKPQILVKGGDYTPEGVVGKDLVESYGGRVELIPFVDGKSTTNIIEKVLERYTDEQ.

Residues 1 to 330 are ribokinase; that stretch reads MDRKMVESLF…AAVSLEHRDS (330 aa). 205–208 serves as a coordination point for ATP; that stretch reads NRKE. The active site involves Asp-275. The segment at 356-491 is cytidylyltransferase; it reads FTNGCFDLLH…KVLERYTDEQ (136 aa).

In the N-terminal section; belongs to the carbohydrate kinase PfkB family. The protein in the C-terminal section; belongs to the cytidylyltransferase family. As to quaternary structure, homodimer.

The enzyme catalyses D-glycero-beta-D-manno-heptose 7-phosphate + ATP = D-glycero-beta-D-manno-heptose 1,7-bisphosphate + ADP + H(+). It catalyses the reaction D-glycero-beta-D-manno-heptose 1-phosphate + ATP + H(+) = ADP-D-glycero-beta-D-manno-heptose + diphosphate. The protein operates within nucleotide-sugar biosynthesis; ADP-L-glycero-beta-D-manno-heptose biosynthesis; ADP-L-glycero-beta-D-manno-heptose from D-glycero-beta-D-manno-heptose 7-phosphate: step 1/4. It participates in nucleotide-sugar biosynthesis; ADP-L-glycero-beta-D-manno-heptose biosynthesis; ADP-L-glycero-beta-D-manno-heptose from D-glycero-beta-D-manno-heptose 7-phosphate: step 3/4. In terms of biological role, catalyzes the phosphorylation of D-glycero-D-manno-heptose 7-phosphate at the C-1 position to selectively form D-glycero-beta-D-manno-heptose-1,7-bisphosphate. Functionally, catalyzes the ADP transfer from ATP to D-glycero-beta-D-manno-heptose 1-phosphate, yielding ADP-D-glycero-beta-D-manno-heptose. In Trichlorobacter lovleyi (strain ATCC BAA-1151 / DSM 17278 / SZ) (Geobacter lovleyi), this protein is Bifunctional protein HldE.